The sequence spans 736 residues: Replication restart protein PriA (736 aa).

The region spanning aspartate 230 to phenylalanine 396 is the Helicase ATP-binding domain. Glycine 243–threonine 250 lines the ATP pocket. Residues aspartate 339–histidine 342 carry the DEAH box motif. Positions 452, 455, 461, 464, 479, 482, 492, and 495 each coordinate Zn(2+). The Helicase C-terminal domain occupies glycine 487–glycine 643.

Belongs to the helicase family. PriA subfamily. Component of the replication restart primosome. The cofactor is Zn(2+).

The enzyme catalyses Couples ATP hydrolysis with the unwinding of duplex DNA by translocating in the 3'-5' direction.. It carries out the reaction ATP + H2O = ADP + phosphate + H(+). Initiates the restart of stalled replication forks, which reloads the replicative helicase on sites other than the origin of replication. Recognizes and binds to abandoned replication forks and remodels them to uncover a helicase loading site. Promotes assembly of the primosome at these replication forks. The protein is Replication restart protein PriA of Thermotoga maritima (strain ATCC 43589 / DSM 3109 / JCM 10099 / NBRC 100826 / MSB8).